A 20-amino-acid polypeptide reads, in one-letter code: Large ribosomal subunit protein uL10 (20 aa).

The protein belongs to the universal ribosomal protein uL10 family. In terms of assembly, part of the ribosomal stalk of the 50S ribosomal subunit. The N-terminus interacts with L11 and the large rRNA to form the base of the stalk. The C-terminus forms an elongated spine to which L12 dimers bind in a sequential fashion forming a multimeric L10(L12)X complex.

In terms of biological role, forms part of the ribosomal stalk, playing a central role in the interaction of the ribosome with GTP-bound translation factors. This is Large ribosomal subunit protein uL10 (rplJ) from Citrobacter freundii.